The chain runs to 455 residues: Phosphoglucosamine mutase (455 aa).

Ser-102 serves as the catalytic Phosphoserine intermediate. Residues Ser-102, Asp-241, Asp-243, and Asp-245 each coordinate Mg(2+). At Ser-102 the chain carries Phosphoserine.

Belongs to the phosphohexose mutase family. Mg(2+) is required as a cofactor. Activated by phosphorylation.

The catalysed reaction is alpha-D-glucosamine 1-phosphate = D-glucosamine 6-phosphate. Functionally, catalyzes the conversion of glucosamine-6-phosphate to glucosamine-1-phosphate. The chain is Phosphoglucosamine mutase from Legionella pneumophila (strain Paris).